Here is a 253-residue protein sequence, read N- to C-terminus: Coenzyme F420:L-glutamate ligase (253 aa).

Residues 9 to 12 (LPEI), 38 to 39 (ST), and Lys43 each bind GTP. Asp113 lines the a divalent metal cation pocket. Asn116 is a GTP binding site. Asp150, Thr151, and Glu208 together coordinate a divalent metal cation. 206 to 213 (SGEGDDGT) provides a ligand contact to GTP.

It belongs to the CofE family. Homodimer. Mg(2+) serves as cofactor. Mn(2+) is required as a cofactor. Requires K(+) as cofactor.

It carries out the reaction oxidized coenzyme F420-0 + GTP + L-glutamate = oxidized coenzyme F420-1 + GDP + phosphate + H(+). It catalyses the reaction oxidized coenzyme F420-1 + GTP + L-glutamate = oxidized coenzyme F420-2 + GDP + phosphate + H(+). Its pathway is cofactor biosynthesis; coenzyme F420 biosynthesis. Functionally, catalyzes the GTP-dependent successive addition of two or more gamma-linked L-glutamates to the L-lactyl phosphodiester of 7,8-didemethyl-8-hydroxy-5-deazariboflavin (F420-0) to form coenzyme F420-0-glutamyl-glutamate (F420-2) or polyglutamated F420 derivatives. The protein is Coenzyme F420:L-glutamate ligase of Halobacterium salinarum (strain ATCC 29341 / DSM 671 / R1).